Here is a 127-residue protein sequence, read N- to C-terminus: Small ribosomal subunit protein uS13 (127 aa).

Residues 90-127 (RRHRQGLPVRGQRTRTNARTRRGRRLTVAGKKKTPAKK) form a disordered region. Positions 101–127 (QRTRTNARTRRGRRLTVAGKKKTPAKK) are enriched in basic residues.

Belongs to the universal ribosomal protein uS13 family. As to quaternary structure, part of the 30S ribosomal subunit. Forms a loose heterodimer with protein S19. Forms two bridges to the 50S subunit in the 70S ribosome.

Located at the top of the head of the 30S subunit, it contacts several helices of the 16S rRNA. In the 70S ribosome it contacts the 23S rRNA (bridge B1a) and protein L5 of the 50S subunit (bridge B1b), connecting the 2 subunits; these bridges are implicated in subunit movement. Contacts the tRNAs in the A and P-sites. The chain is Small ribosomal subunit protein uS13 from Synechocystis sp. (strain ATCC 27184 / PCC 6803 / Kazusa).